Reading from the N-terminus, the 322-residue chain is uncharacterized protein (322 aa).

Residues 299-319 traverse the membrane as a helical segment; sequence GLLLEGTIVALILLEIILALA.

It localises to the membrane. This is an uncharacterized protein from Methanocaldococcus jannaschii (strain ATCC 43067 / DSM 2661 / JAL-1 / JCM 10045 / NBRC 100440) (Methanococcus jannaschii).